Reading from the N-terminus, the 240-residue chain is UDP-2,3-diacylglucosamine hydrolase (240 aa).

Positions 9, 11, 43, 81, and 116 each coordinate Mn(2+). 81 to 82 is a substrate binding site; sequence NR. Asp124, Ser162, Lys166, Lys169, and His197 together coordinate substrate. His197 and His199 together coordinate Mn(2+).

Belongs to the LpxH family. It depends on Mn(2+) as a cofactor.

The protein localises to the cell inner membrane. The catalysed reaction is UDP-2-N,3-O-bis[(3R)-3-hydroxytetradecanoyl]-alpha-D-glucosamine + H2O = 2-N,3-O-bis[(3R)-3-hydroxytetradecanoyl]-alpha-D-glucosaminyl 1-phosphate + UMP + 2 H(+). The protein operates within glycolipid biosynthesis; lipid IV(A) biosynthesis; lipid IV(A) from (3R)-3-hydroxytetradecanoyl-[acyl-carrier-protein] and UDP-N-acetyl-alpha-D-glucosamine: step 4/6. Its function is as follows. Hydrolyzes the pyrophosphate bond of UDP-2,3-diacylglucosamine to yield 2,3-diacylglucosamine 1-phosphate (lipid X) and UMP by catalyzing the attack of water at the alpha-P atom. Involved in the biosynthesis of lipid A, a phosphorylated glycolipid that anchors the lipopolysaccharide to the outer membrane of the cell. This Neisseria meningitidis serogroup A / serotype 4A (strain DSM 15465 / Z2491) protein is UDP-2,3-diacylglucosamine hydrolase.